The primary structure comprises 162 residues: Protein A49 (162 aa).

The protein belongs to the poxviridae A49 protein family.

The polypeptide is Protein A49 (Variola virus (isolate Human/India/Ind3/1967) (VARV)).